Here is a 460-residue protein sequence, read N- to C-terminus: Crocetin glucosyltransferase 2 (460 aa).

H19 functions as the Proton acceptor in the catalytic mechanism. H19 lines the an anthocyanidin pocket. T133, Q333, H348, W351, N352, S353, E356, D372, and Q373 together coordinate UDP-alpha-D-glucose.

The protein belongs to the UDP-glycosyltransferase family. As to expression, mainly expressed in fully developed stigmas.

The enzyme catalyses crocetin + UDP-alpha-D-glucose = beta-D-glucosyl crocetin + UDP. It catalyses the reaction beta-D-glucosyl crocetin + UDP-alpha-D-glucose = bis(beta-D-glucosyl) crocetin + UDP. The catalysed reaction is beta-D-gentiobiosyl crocetin + UDP-alpha-D-glucose = beta-D-gentiobiosyl beta-D-glucosyl crocetin + UDP. Crocetin glucosyltransferase involved in the synthesis of crocin, one of the apocarotenoids responsible for the color and bitter taste of saffron. This is Crocetin glucosyltransferase 2 (GLT2) from Crocus sativus (Saffron).